Reading from the N-terminus, the 112-residue chain is M-myrmeciitoxin-Mp1 (112 aa).

Residues 1–26 form the signal peptide; it reads MKLSCLLLTLTIIFVLTIVHAPNVEA. The propeptide occupies 27–56; sequence KDLADPESEAVGFADAFGEADAVGEADPNA. A critical for cytotoxic activity region spans residues 57–78; that stretch reads GLGSVFGRLARILGRVIPKVAK. The igE-binding determinant stretch occupies residues 93–106; the sequence is KEAIPMAVEMAKSQ.

The protein belongs to the formicidae venom precursor-01 superfamily. Ant pilosulin family. In terms of tissue distribution, expressed by the venom gland.

Its subcellular location is the secreted. Functionally, has strong cytotoxic and hemolytic activities. Is more potent against mononuclear leukocytes than against granulocytes. The synthesized peptide 57-76 shows a potent and broad spectrum antimicrobial activity against both Gram-positive and Gram-negative bacteria, and also against the fungus C.albicans. Adopts an alpha-helical structure. This Myrmecia pilosula (Jack jumper ant) protein is M-myrmeciitoxin-Mp1.